The primary structure comprises 29 residues: Cytochrome b6-f complex subunit 8 (29 aa).

A helical membrane pass occupies residues 3–23; it reads IVSIAWAALMVVFSFSLSLVV.

The protein belongs to the PetN family. In terms of assembly, the 4 large subunits of the cytochrome b6-f complex are cytochrome b6, subunit IV (17 kDa polypeptide, PetD), cytochrome f and the Rieske protein, while the 4 small subunits are PetG, PetL, PetM and PetN. The complex functions as a dimer.

It is found in the plastid. Its subcellular location is the chloroplast thylakoid membrane. Component of the cytochrome b6-f complex, which mediates electron transfer between photosystem II (PSII) and photosystem I (PSI), cyclic electron flow around PSI, and state transitions. This chain is Cytochrome b6-f complex subunit 8, found in Phaseolus vulgaris (Kidney bean).